The primary structure comprises 91 residues: Large ribosomal subunit protein bL27 (91 aa).

Positions 1–26 are disordered; that stretch reads MAHKKGVGSSRNGRDSNPKMRGVKRF.

The protein belongs to the bacterial ribosomal protein bL27 family.

The sequence is that of Large ribosomal subunit protein bL27 from Chloroflexus aurantiacus (strain ATCC 29366 / DSM 635 / J-10-fl).